We begin with the raw amino-acid sequence, 50 residues long: Large ribosomal subunit protein bL33 (50 aa).

Belongs to the bacterial ribosomal protein bL33 family.

In Fusobacterium nucleatum subsp. nucleatum (strain ATCC 25586 / DSM 15643 / BCRC 10681 / CIP 101130 / JCM 8532 / KCTC 2640 / LMG 13131 / VPI 4355), this protein is Large ribosomal subunit protein bL33.